Consider the following 397-residue polypeptide: Acetyl-CoA acetyltransferase, cytosolic (397 aa).

Residue M1 is modified to N-acetylmethionine. Catalysis depends on C92, which acts as the Acyl-thioester intermediate. K200 carries the N6-acetyllysine modification. CoA-binding residues include R223 and S226. Residues K233 and K235 each carry the N6-acetyllysine modification. CoA is bound at residue S252. C383 (proton donor/acceptor) is an active-site residue.

It belongs to the thiolase-like superfamily. Thiolase family. As to quaternary structure, homotetramer.

It localises to the cytoplasm. The protein resides in the cytosol. The enzyme catalyses 2 acetyl-CoA = acetoacetyl-CoA + CoA. The protein operates within lipid metabolism; fatty acid metabolism. Its function is as follows. Involved in the biosynthetic pathway of cholesterol. This Rattus norvegicus (Rat) protein is Acetyl-CoA acetyltransferase, cytosolic (Acat2).